The sequence spans 122 residues: Basic phospholipase A2 homolog (122 aa).

Disulfide bonds link Cys26–Cys115, Cys28–Cys44, Cys43–Cys95, Cys49–Cys122, Cys50–Cys88, Cys57–Cys81, and Cys75–Cys86. The important for membrane-damaging activities in eukaryotes and bacteria; heparin-binding stretch occupies residues 105-117 (KRYMTYPNILCSS).

It belongs to the phospholipase A2 family. Group II subfamily. N49 sub-subfamily. Expressed by the venom gland.

The protein localises to the secreted. The polypeptide is Basic phospholipase A2 homolog (Gloydius halys (Chinese water mocassin)).